The following is a 313-amino-acid chain: Probable 5-dehydro-4-deoxyglucarate dehydratase (313 aa).

This sequence belongs to the DapA family.

It carries out the reaction 5-dehydro-4-deoxy-D-glucarate + H(+) = 2,5-dioxopentanoate + CO2 + H2O. The protein operates within carbohydrate acid metabolism; D-glucarate degradation; 2,5-dioxopentanoate from D-glucarate: step 2/2. The protein is Probable 5-dehydro-4-deoxyglucarate dehydratase of Bradyrhizobium sp. (strain BTAi1 / ATCC BAA-1182).